The chain runs to 287 residues: 4,4'-diapophytoene synthase (287 aa).

Residues 18 to 21, Tyr-41, and Arg-45 contribute to the (2E,6E)-farnesyl diphosphate site; that span reads HSKS. Mg(2+) contacts are provided by Asp-48 and Asp-52. Gln-165 is a binding site for (2E,6E)-farnesyl diphosphate. A Mg(2+)-binding site is contributed by Asn-168. (2E,6E)-farnesyl diphosphate is bound at residue Arg-171. Asp-172 contacts Mg(2+). Tyr-248 is a (2E,6E)-farnesyl diphosphate binding site.

This sequence belongs to the phytoene/squalene synthase family. CrtM subfamily. It depends on Mg(2+) as a cofactor.

The enzyme catalyses 2 (2E,6E)-farnesyl diphosphate = 15-cis-4,4'-diapophytoene + 2 diphosphate. The protein operates within carotenoid biosynthesis; staphyloxanthin biosynthesis; staphyloxanthin from farnesyl diphosphate: step 1/5. Functionally, involved in the biosynthesis of the yellow-orange carotenoid staphyloxanthin, which plays a role in the virulence via its protective function against oxidative stress. Catalyzes the head-to-head condensation of two molecules of farnesyl diphosphate (FPP) into the colorless C(30) carotenoid 4,4'-diapophytoene (dehydrosqualene). The sequence is that of 4,4'-diapophytoene synthase from Staphylococcus aureus (strain NCTC 8325 / PS 47).